Reading from the N-terminus, the 1463-residue chain is Probable oxidoreductase PXDNL (1463 aa).

Positions 1–23 are cleaved as a signal peptide; that stretch reads MEPRLFCWTTLFLLAGWCLPGLP. Positions 24 to 50 constitute an LRRNT domain; the sequence is CPSRCLCFKSTVRCMHLMLDHIPQVPQ. LRR repeat units follow at residues 51–72, 75–96, 99–120, 123–144, and 147–168; these read QTTV…AFKK, NLNT…AFEG, NLLY…TFKG, SLEH…TFGD, and RLER…SFSN. In terms of domain architecture, LRRCT spans 180–233; sequence NALVCDCDLMWLGELLQGFAQHGHTQAAATCEYPRRLHGRAVASVTVEEFNCQS. 4 Ig-like C2-type domains span residues 234–322, 330–414, 419–504, and 507–596; these read PRIT…AMLR, PSFV…ANII, PQFT…VQLT, and PKAL…MFLT. Intrachain disulfides connect cysteine 255/cysteine 305, cysteine 351/cysteine 398, cysteine 440/cysteine 488, cysteine 532/cysteine 580, and cysteine 718/cysteine 734. Asparagine 387 carries N-linked (GlcNAc...) asparagine glycosylation. Catalysis depends on histidine 812, which acts as the Proton acceptor. Aspartate 813 serves as a coordination point for Ca(2+). 2 disulfide bridges follow: cysteine 832–cysteine 842 and cysteine 836–cysteine 859. Ca(2+) is bound by residues threonine 891, tyrosine 893, aspartate 895, and serine 897. Residues cysteine 944 and cysteine 953 are joined by a disulfide bond. Position 1057 (histidine 1057) interacts with heme b. Cystine bridges form between cysteine 1160-cysteine 1217 and cysteine 1258-cysteine 1284. One can recognise a VWFC domain in the interval 1393-1451; that stretch reads AGCTDVRGVPRKAEERWMKEDCTHCICESGQVTCVVEICPPAPCPSPELVKGTCCPVCR.

This sequence belongs to the peroxidase family. XPO subfamily. As to quaternary structure, interacts with PXDN; this interaction inhibits the peroxidase activity of PXDN. Heme b serves as cofactor. Phosphorylation by SRC on tyrosine residues is required for targeting to polysomes. In terms of tissue distribution, the 57 kDa isoform PMR1 is the only form detected at protein levels in human cell lines. Expressed in heart.

It is found in the secreted. The protein resides in the endoplasmic reticulum. Its subcellular location is the cell membrane. The protein localises to the cytoplasm. Functionally, probable oxidoreductase. Lacks peroxidase activity. Inhibits the peroxidase activity of PXDN through its interaction. Its function is as follows. Endonuclease selectively degrading some target mRNAs while they are engaged by translating ribosomes, among which albumin and beta-globin mRNAs. The chain is Probable oxidoreductase PXDNL from Homo sapiens (Human).